The primary structure comprises 244 residues: Ribonuclease HII (244 aa).

One can recognise an RNase H type-2 domain in the interval 31–222 (RLIAGVDEAG…VRLALQGREG (192 aa)). The a divalent metal cation site is built by aspartate 37, glutamate 38, and aspartate 130.

Belongs to the RNase HII family. Mn(2+) is required as a cofactor. Mg(2+) serves as cofactor.

Its subcellular location is the cytoplasm. It carries out the reaction Endonucleolytic cleavage to 5'-phosphomonoester.. Its function is as follows. Endonuclease that specifically degrades the RNA of RNA-DNA hybrids. In Xanthomonas axonopodis pv. citri (strain 306), this protein is Ribonuclease HII.